We begin with the raw amino-acid sequence, 413 residues long: N-acylneuraminate cytidylyltransferase (413 aa).

This sequence belongs to the CMP-NeuNAc synthase family. The cofactor is Mg(2+). It depends on Mn(2+) as a cofactor.

It localises to the cytoplasm. The enzyme catalyses an N-acylneuraminate + CTP = a CMP-N-acyl-beta-neuraminate + diphosphate. Catalyzes the formation of CMP-N-acetylneuraminic acid (CMP-NeuNAc), which is essential for the formation of the capsule. The chain is N-acylneuraminate cytidylyltransferase (neuA) from Streptococcus agalactiae serotype V (strain ATCC BAA-611 / 2603 V/R).